A 279-amino-acid chain; its full sequence is B3 domain-containing protein Os05g0481400 (279 aa).

Residues 45–68 (ARLQKSTRASPKPRKKFEVGATEV) are disordered. A DNA-binding region (TF-B3) is located at residues 139–230 (FVKTMVRSHV…RFKIYIIKAV (92 aa)). 2 stretches are compositionally biased toward acidic residues: residues 233-244 (DANESEPADEEA) and 252-262 (TEDAAEQDDSP). The tract at residues 233 to 279 (DANESEPADEEAIGDKDTSTEDAAEQDDSPNAEPLKGTKRRKLRGRR) is disordered. Basic residues predominate over residues 269–279 (GTKRRKLRGRR).

The protein localises to the nucleus. In Oryza sativa subsp. japonica (Rice), this protein is B3 domain-containing protein Os05g0481400.